The following is a 409-amino-acid chain: Elongation factor Tu (409 aa).

Residues 10-214 form the tr-type G domain; it reads KPHVNIGTIG…AVDSYIPTPE (205 aa). The G1 stretch occupies residues 19–26; it reads GHVDHGKT. Position 19 to 26 (19 to 26) interacts with GTP; the sequence is GHVDHGKT. Threonine 26 lines the Mg(2+) pocket. The segment at 60 to 64 is G2; it reads GITIN. Positions 81–84 are G3; sequence DCPG. GTP is bound by residues 81 to 85 and 136 to 139; these read DCPGH and NKVD. The tract at residues 136–139 is G4; it reads NKVD. Positions 174–176 are G5; that stretch reads SGL.

The protein belongs to the TRAFAC class translation factor GTPase superfamily. Classic translation factor GTPase family. EF-Tu/EF-1A subfamily. Monomer.

It is found in the cytoplasm. It catalyses the reaction GTP + H2O = GDP + phosphate + H(+). GTP hydrolase that promotes the GTP-dependent binding of aminoacyl-tRNA to the A-site of ribosomes during protein biosynthesis. The polypeptide is Elongation factor Tu (Cyanothece sp. (strain PCC 7425 / ATCC 29141)).